A 231-amino-acid polypeptide reads, in one-letter code: tRNA (guanine-N(1)-)-methyltransferase (231 aa).

S-adenosyl-L-methionine-binding positions include Gly-114 and 134-139 (IGDYVL).

Belongs to the RNA methyltransferase TrmD family. As to quaternary structure, homodimer.

The protein resides in the cytoplasm. It catalyses the reaction guanosine(37) in tRNA + S-adenosyl-L-methionine = N(1)-methylguanosine(37) in tRNA + S-adenosyl-L-homocysteine + H(+). Functionally, specifically methylates guanosine-37 in various tRNAs. This Clostridioides difficile (strain 630) (Peptoclostridium difficile) protein is tRNA (guanine-N(1)-)-methyltransferase.